Consider the following 222-residue polypeptide: UPF0173 metal-dependent hydrolase Kcr_0055 (222 aa).

This sequence belongs to the UPF0173 family.

The chain is UPF0173 metal-dependent hydrolase Kcr_0055 from Korarchaeum cryptofilum (strain OPF8).